The chain runs to 133 residues: Histone H2A (133 aa).

Gly residues predominate over residues 1–10 (MTGGKSGGKA). The interval 1–24 (MTGGKSGGKASGSKNAQSRSSKAG) is disordered. N6-acetyllysine occurs at positions 5 and 9. Residue Gln106 is modified to N5-methylglutamine. Ser130 is subject to Phosphoserine. The [ST]-Q motif signature appears at 130-131 (SQ).

Belongs to the histone H2A family. The nucleosome is a histone octamer containing two molecules each of H2A, H2B, H3 and H4 assembled in one H3-H4 heterotetramer and two H2A-H2B heterodimers. The octamer wraps approximately 147 bp of DNA. Phosphorylated to form H2AS128ph (gamma-H2A) in response to DNA double-strand breaks (DSBs) generated by exogenous genotoxic agents and by stalled replication forks. Phosphorylation is dependent on the DNA damage checkpoint kinases mec1/ATR and tel1/ATM, spreads on either side of a detected DSB site and may mark the surrounding chromatin for recruitment of proteins required for DNA damage signaling and repair. Gamma-H2A is removed from the DNA prior to the strand invasion-primer extension step of the repair process and subsequently dephosphorylated. Dephosphorylation is necessary for efficient recovery from the DNA damage checkpoint. Post-translationally, acetylated by esa1 to form H2AK4ac and H2AK7ac.

The protein resides in the nucleus. Its subcellular location is the chromosome. Core component of nucleosome which plays a central role in DNA double strand break (DSB) repair. Nucleosomes wrap and compact DNA into chromatin, limiting DNA accessibility to the cellular machineries which require DNA as a template. Histones thereby play a central role in transcription regulation, DNA repair, DNA replication and chromosomal stability. DNA accessibility is regulated via a complex set of post-translational modifications of histones, also called histone code, and nucleosome remodeling. This chain is Histone H2A (hta1), found in Aspergillus clavatus (strain ATCC 1007 / CBS 513.65 / DSM 816 / NCTC 3887 / NRRL 1 / QM 1276 / 107).